The chain runs to 245 residues: 2,3-bisphosphoglycerate-dependent phosphoglycerate mutase (245 aa).

Substrate-binding positions include R8–N15, T21–G22, R60, E87–Y90, K98, R114–R115, and G183–N184. The active-site Tele-phosphohistidine intermediate is the H9. The Proton donor/acceptor role is filled by E87.

The protein belongs to the phosphoglycerate mutase family. BPG-dependent PGAM subfamily.

It carries out the reaction (2R)-2-phosphoglycerate = (2R)-3-phosphoglycerate. Its pathway is carbohydrate degradation; glycolysis; pyruvate from D-glyceraldehyde 3-phosphate: step 3/5. Catalyzes the interconversion of 2-phosphoglycerate and 3-phosphoglycerate. The protein is 2,3-bisphosphoglycerate-dependent phosphoglycerate mutase of Bacillus cereus (strain G9842).